A 580-amino-acid chain; its full sequence is Cytochrome P450 monooxygenase helB1 (580 aa).

The interval 1–32 (MRTYAIRPVSNRLPGPIEPKKHRRDRDNSTTG) is disordered. An N-linked (GlcNAc...) asparagine glycan is attached at N28. A helical transmembrane segment spans residues 61–81 (FLNTISVLQVLAAIFIGALTY). C497 contacts heme.

It belongs to the cytochrome P450 family. It depends on heme as a cofactor.

Its subcellular location is the membrane. The protein operates within mycotoxin biosynthesis. Cytochrome P450 monooxygenase; part of the gene cluster that mediates the biosynthesis of helvolic acid, an antibacterial nortriterpenoid. Protostadienol synthase helA cyclizes (3S)-oxidosqualene to (17Z)-protosta-17(20),24-dien-3-beta-ol (protostadienol). The synthesis of protostadienol is followed by several steps of monooxygenation, dehydrogenation, and acyl transfer to yield the final helvolic acid. Following the cyclization to the tetracyclic protostadienol by helA, cytochrome P450 monooxygenases helB1-mediated and helB2-mediated oxidation at C-4 and C-16, acyltransferase helD2-dependent acetylation of 16-OH, oxidation of C-21 by cytochrome P450 monooxygenase helB4, and short chain dehydrogenase helC-dependent oxidative decarboxylation yield the fusidane skeleton. This intermediate is further modified in three additional steps mediated by the cytochrome P450 monooxygenase helB3, the acyltransferase helD1, and the 3-ketosteroid 1-dehydrogenase helE to give helvolic acid. Compared with the late stages in the biosynthesis of helvolic acid, enzymes involved in the early stage modifications act in a relatively strict order. The hydroxylation of C-16 by helB1 and subsequent acetylation by helD2 should occur before the helB3-mediated oxidation of C-21. C-4 demethylation in fusidane-type antibiotics proceeds in an unusual manner though it is also achieved by oxidative decarboxylation. The methyl group at C-4 beta position is oxidized by helB1 and subsequently removed by the short chain dehydrogenase helC. The sequence is that of Cytochrome P450 monooxygenase helB1 from Aspergillus fumigatus (strain ATCC MYA-4609 / CBS 101355 / FGSC A1100 / Af293) (Neosartorya fumigata).